We begin with the raw amino-acid sequence, 396 residues long: NADH-quinone oxidoreductase subunit D (396 aa).

This sequence belongs to the complex I 49 kDa subunit family. As to quaternary structure, NDH-1 is composed of 14 different subunits. Subunits NuoB, C, D, E, F, and G constitute the peripheral sector of the complex.

Its subcellular location is the cell inner membrane. It catalyses the reaction a quinone + NADH + 5 H(+)(in) = a quinol + NAD(+) + 4 H(+)(out). Functionally, NDH-1 shuttles electrons from NADH, via FMN and iron-sulfur (Fe-S) centers, to quinones in the respiratory chain. The immediate electron acceptor for the enzyme in this species is believed to be ubiquinone. Couples the redox reaction to proton translocation (for every two electrons transferred, four hydrogen ions are translocated across the cytoplasmic membrane), and thus conserves the redox energy in a proton gradient. The polypeptide is NADH-quinone oxidoreductase subunit D (Bartonella henselae (strain ATCC 49882 / DSM 28221 / CCUG 30454 / Houston 1) (Rochalimaea henselae)).